Consider the following 349-residue polypeptide: Insulin gene enhancer protein ISL-1 (349 aa).

LIM zinc-binding domains follow at residues 17-70 and 79-133; these read CVGC…CKRD and CAKC…RADH. A DNA-binding region (homeobox) is located at residues 181–240; it reads TTRVRTVLNEKQLHTLRTCYAANPRPDALMKEQLVEMTGLSPRVIRVWFQNKRCKDKKRS. The interval 312–349 is disordered; the sequence is VNFSEGGPGSNSTGSEVASMSSQLPDTPNSMVASPIEA. Residues 321 to 343 show a composition bias toward polar residues; it reads SNSTGSEVASMSSQLPDTPNSMV.

Its subcellular location is the nucleus. In terms of biological role, acts as a transcriptional regulator. Recognizes and binds to the consensus octamer binding site 5'-ATAATTAA-3' in promoter of target genes. Plays a fundamental role in the gene regulatory network essential for retinal ganglion cell (RGC) differentiation. Binds to insulin gene enhancer sequences. Defines subclasses of motoneurons that segregate into columns in the spinal cord and select distinct axon pathways. Acts in conjunction with LHX1, LHX3 and ISL2. Binds to insulin gene enhancer sequences. Essential for heart development. This Gallus gallus (Chicken) protein is Insulin gene enhancer protein ISL-1 (ISL1).